Reading from the N-terminus, the 583-residue chain is MYPEESRGSGGVATVDFLEGLMTMTAPTPAPTPLYSHSTTGCYSAPLDAHGPLSDGSLQSLGSGPTSPLVFVPSSPRLSPFMHPPSHHYLETTSTPVYRSSHQPVPREDQCGTRDEAYSVGELGAGAGGFEITKNTRFCAVCSDYASGYHYGVWSCEGCKAFFKRSIQGHNDYMCPATNQCTIDKNRRKSCQACRLRKCYEVGMMKGGMRKDRGRVLRREKHGPAQRQTSQNLPTHKASPQDGRKRAMSSSSTSGPGGRSSLNNMPPDQVLLLLQGAEPPILCSRQKMSRPYTEVTIMTLLTSMADKELVHMITWAKKLPGFLQLSLHDQVLLLESSWLEVLMIGLIWRSIQCPGKLIFEEDLILDRNEGTCVEGMAEIFDMLLATVRFRVLKLKPEEFVCLKAIILLNSGAFSFCTGTMEPLHDSVAVQHMLDTITDALIFHISHFGCSAQQQSRRQAQLLLLLSHIRHMSNKGMEHLYSMKCKNKVPLYDLLLEMLDAHRIHRPVKPSQSWSQGDRDSPTASSTSSRGGGGGDDEGASSAGSSSGPQGSHESPRRENLSRAPKGPGVLQYRGSHSDCTRIP.

Positions 1–138 are modulating; it reads MYPEESRGSG…GFEITKNTRF (138 aa). 2 NR C4-type zinc fingers span residues 139–159 and 175–199; these read CAVC…CEGC and CPAT…LRKC. Positions 139-204 form a DNA-binding region, nuclear receptor; sequence CAVCSDYASG…RLRKCYEVGM (66 aa). Residues 205–265 are hinge; the sequence is MKGGMRKDRG…PGGRSSLNNM (61 aa). The segment at 220-263 is disordered; sequence EKHGPAQRQTSQNLPTHKASPQDGRKRAMSSSSTSGPGGRSSLN. Residues 266 to 501 form the NR LBD domain; that stretch reads PPDQVLLLLQ…DLLLEMLDAH (236 aa). Residues 506-583 are disordered; sequence PVKPSQSWSQ…GSHSDCTRIP (78 aa). The span at 539–551 shows a compositional bias: low complexity; it reads ASSAGSSSGPQGS.

Belongs to the nuclear hormone receptor family. NR3 subfamily. Binds DNA as a homodimer. Can form a heterodimer with ER-beta.

It is found in the nucleus. Its function is as follows. The steroid hormones and their receptors are involved in the regulation of eukaryotic gene expression and affect cellular proliferation and differentiation in target tissues. The sequence is that of Estrogen receptor (esr1) from Oreochromis aureus (Israeli tilapia).